Reading from the N-terminus, the 297-residue chain is Small ribosomal subunit protein uS9m (297 aa).

The disordered stretch occupies residues 278–297; sequence VERKKPGKRKARKMPTWVKR.

This sequence belongs to the universal ribosomal protein uS9 family.

It is found in the mitochondrion. This chain is Small ribosomal subunit protein uS9m (MRPS9), found in Kluyveromyces lactis (strain ATCC 8585 / CBS 2359 / DSM 70799 / NBRC 1267 / NRRL Y-1140 / WM37) (Yeast).